Here is a 472-residue protein sequence, read N- to C-terminus: Poly(A) polymerase catalytic subunit (472 aa).

Active-site residues include aspartate 194 and aspartate 196.

Belongs to the poxviridae poly(A) polymerase catalytic subunit family. In terms of assembly, heterodimer of a large (catalytic) subunit and a small (regulatory) subunit.

The enzyme catalyses RNA(n) + ATP = RNA(n)-3'-adenine ribonucleotide + diphosphate. In terms of biological role, polymerase that creates the 3'-poly(A) tail of mRNA's. The sequence is that of Poly(A) polymerase catalytic subunit (PAPL) from Fowlpox virus (strain NVSL) (FPV).